Reading from the N-terminus, the 523-residue chain is Maltose/maltodextrin transport system permease protein MalF (523 aa).

Over 1 to 22 the chain is Cytoplasmic; that stretch reads MQSVQGTDAMTAPAASLPGSKK. A helical membrane pass occupies residues 23-45; that stretch reads VFIKWALLGTVGLINGYATILMY. At 46 to 49 the chain is on the periplasmic side; the sequence is SRGE. A helical transmembrane segment spans residues 50–69; sequence VAFAMLTVILTALALYVFGS. At 70 to 81 the chain is on the cytoplasmic side; sequence KKTYAHRYIYPG. The helical transmembrane segment at 82–104 threads the bilayer; that stretch reads IAGMILFILFPLAYTVGLAFTNY. At 105 to 288 the chain is on the periplasmic side; the sequence is SAKNQLSLDR…DDGIKEPFIS (184 aa). A helical membrane pass occupies residues 289–311; sequence IFIWTVVFSILTVLLTLMIGLVL. Residues 290-514 form the ABC transmembrane type-1 domain; the sequence is FIWTVVFSIL…LLVGALALLN (225 aa). The Cytoplasmic portion of the chain corresponds to 312 to 322; sequence ASVVQWEELKG. A helical membrane pass occupies residues 323–345; the sequence is RAIYRVLLILPYAVPAFISILIF. Residues 346–378 lie on the Periplasmic side of the membrane; the sequence is KGLFNQSFGEINMVLNALFGISPSWFSDPIMAK. Residues 379–401 form a helical membrane-spanning segment; that stretch reads SMVLIVNTWLGFPYMMILCMGLL. Residues 402–434 lie on the Cytoplasmic side of the membrane; the sequence is KAIPEDLYEASAIDGANFVQNFTRVTLPLMIKP. A helical transmembrane segment spans residues 435-457; the sequence is LTPLLIASFAFNFNNFVMIQLLT. Over 458 to 492 the chain is Periplasmic; sequence QGGPNMIGTSEPAGYTDLLVSYTYRIAFEGGGGQD. A helical transmembrane segment spans residues 493–515; it reads FGLASAIATLIFLLVGALALLNL. Topologically, residues 516-523 are cytoplasmic; that stretch reads RFTKLSQN.

This sequence belongs to the binding-protein-dependent transport system permease family. MalFG subfamily. In terms of assembly, the complex is composed of two ATP-binding proteins (MalK), two transmembrane proteins (MalG and MalF) and a solute-binding protein (MalE).

Its subcellular location is the cell inner membrane. Part of the ABC transporter complex MalEFGK involved in maltose/maltodextrin import. Probably responsible for the translocation of the substrate across the membrane. The chain is Maltose/maltodextrin transport system permease protein MalF (malF) from Vibrio vulnificus (strain CMCP6).